A 127-amino-acid polypeptide reads, in one-letter code: Mitochondrial pyruvate carrier 2 (127 aa).

Residues 2-40 (SAAGARGLRATYHRLLDKVELMLPEKLRPLYNHPAGPRT) are Mitochondrial matrix-facing. A helical membrane pass occupies residues 41–61 (VFFWAPIMKWGLVCAGLADMA). Residues 62-72 (RPAEKLSTAQS) are Mitochondrial intermembrane-facing. Residues 73–90 (AVLMATGFIWSRYSLVII) traverse the membrane as a helical segment. Topologically, residues 91–95 (PKNWS) are mitochondrial matrix. Residues 96–115 (LFAVNFFVGAAGASQLFRIW) form a helical membrane-spanning segment. The Mitochondrial intermembrane portion of the chain corresponds to 116 to 127 (RYNQELKAKAHK).

This sequence belongs to the mitochondrial pyruvate carrier (MPC) (TC 2.A.105) family. Homodimer. Homooligomer. Forms heterodimers with MPC1 and MPC1L. The heterodimer is the more stable and dominant form.

Its subcellular location is the mitochondrion inner membrane. It catalyses the reaction pyruvate(out) + H(+)(out) = pyruvate(in) + H(+)(in). Mediates the uptake of pyruvate into mitochondria. The chain is Mitochondrial pyruvate carrier 2 (MPC2) from Homo sapiens (Human).